The following is a 1298-amino-acid chain: Histone-lysine N-methyltransferase EHMT1 (1298 aa).

2 disordered regions span residues 1-111 (MAAA…HVTA) and 144-192 (ASSL…RKLP). N-acetylalanine is present on Ala-2. A Glycyl lysine isopeptide (Lys-Gly) (interchain with G-Cter in SUMO1); alternate cross-link involves residue Lys-22. Lys-22 is covalently cross-linked (Glycyl lysine isopeptide (Lys-Gly) (interchain with G-Cter in SUMO2); alternate). Residues 38–50 (SAEKQAGEAHMAA) show a composition bias toward basic and acidic residues. 2 stretches are compositionally biased toward polar residues: residues 54-67 (TNGS…SSHA) and 76-89 (SARV…NTLT). Residues 96–105 (VSERDSEAAK) show a composition bias toward basic and acidic residues. Residues Lys-190, Lys-199, Lys-231, Lys-234, Lys-317, and Lys-327 each participate in a glycyl lysine isopeptide (Lys-Gly) (interchain with G-Cter in SUMO2) cross-link. The interval 211-234 (VVGLHAASKDPREVREARDHKEPK) is disordered. A compositionally biased stretch (basic and acidic residues) spans 217-234 (ASKDPREVREARDHKEPK). The tract at residues 339 to 479 (VNGESLEMDS…QTAPGDSTGY (141 aa)) is disordered. Positions 344 to 360 (LEMDSDEDDSEELEEDD) are enriched in acidic residues. Positions 373–393 (EDSRTSKESMSEADRAQKMDG) are enriched in basic and acidic residues. Residues 394-416 (ESEEEQESVDTGEEEEGGDESDL) are compositionally biased toward acidic residues. Residue Lys-432 forms a Glycyl lysine isopeptide (Lys-Gly) (interchain with G-Cter in SUMO2) linkage. Phosphoserine is present on Ser-435. A compositionally biased stretch (basic residues) spans 440–452 (PARKRRRRSRKKP). Positions 460–474 (SYKSSAGSAEQTAPG) are enriched in polar residues. Ser-483 carries the post-translational modification Phosphoserine. Residues Lys-492, Lys-559, Lys-644, Lys-659, Lys-684, and Lys-731 each participate in a glycyl lysine isopeptide (Lys-Gly) (interchain with G-Cter in SUMO2) cross-link. The disordered stretch occupies residues 644–717 (KADTTSTVTP…TPGLSQGPGK (74 aa)). ANK repeat units lie at residues 737 to 766 (FHPK…DPNF), 772 to 801 (NKRS…NIDT), 805 to 834 (DQRT…LVDP), 838 to 868 (EGST…DVNC), 872 to 901 (GGWT…DINI), 905 to 934 (EENI…DLHA), 938 to 967 (HGDS…DVTL), and 971 to 1004 (EGET…DRPS). The histone H3K9me binding stretch occupies residues 905–907 (EEN). A phosphoserine mark is found at Ser-1004 and Ser-1048. A Pre-SET domain is found at 1060-1123 (QYCVCIDDCS…NCRNRVVQNG (64 aa)). Positions 1062, 1064, 1068, 1073, 1075, 1105, 1109, 1111, and 1115 each coordinate Zn(2+). The SET domain maps to 1126-1243 (ARLQLYRTRD…AGEQLGFDYG (118 aa)). S-adenosyl-L-methionine contacts are provided by residues 1136–1138 (MGW), Tyr-1173, and 1200–1201 (NH). Residues 1162 to 1181 (DSEADVREEDSYLFDLDNKD) form an interaction with histone H3 region. Position 1203 (Cys-1203) interacts with Zn(2+). The interval 1242 to 1245 (YGER) is interaction with histone H3. Residue Cys-1256 participates in Zn(2+) binding. Arg-1257 is a binding site for S-adenosyl-L-methionine. The Zn(2+) site is built by Cys-1258 and Cys-1263. The interval 1274 to 1298 (QASAAQEAQEDGLPDTSSAAAADPL) is disordered.

The protein belongs to the class V-like SAM-binding methyltransferase superfamily. As to quaternary structure, heterodimer; heterodimerizes with EHMT2. Interacts with WIZ and EHMT2. Part of the E2F6.com-1 complex in G0 phase composed of E2F6, MGA, MAX, TFDP1, CBX3, BAT8, EHMT1, RING1, RNF2, MBLR, L3MBTL2 and YAF2. Interacts (via ANK repeats) with RELA (when monomethylated at 'Lys-310'). Interacts with MPHOSPH8. Interacts with CDYL. Interacts with REST only in the presence of CDYL. Part of a complex containing at least CDYL, REST, WIZ, SETB1, EHMT1 and EHMT2. Interacts with BAZ2B. As to expression, widely expressed.

It localises to the nucleus. Its subcellular location is the chromosome. The catalysed reaction is N(6)-methyl-L-lysyl(9)-[histone H3] + S-adenosyl-L-methionine = N(6),N(6)-dimethyl-L-lysyl(9)-[histone H3] + S-adenosyl-L-homocysteine + H(+). The enzyme catalyses L-lysyl(9)-[histone H3] + S-adenosyl-L-methionine = N(6)-methyl-L-lysyl(9)-[histone H3] + S-adenosyl-L-homocysteine + H(+). Its activity is regulated as follows. Methyltransferase activity is inhibited by BIX-01294. Efficiently inhibited by compound E72, a BIX-01294 derivative in which the diazepane ring and the benzyl are replaced with a 3-dimethylaminopropyl and a 5-aminopentyl group at sites B and C, respectively. Its function is as follows. Histone methyltransferase that specifically mono- and dimethylates 'Lys-9' of histone H3 (H3K9me1 and H3K9me2, respectively) in euchromatin. H3K9me represents a specific tag for epigenetic transcriptional repression by recruiting HP1 proteins to methylated histones. Also weakly methylates 'Lys-27' of histone H3 (H3K27me). Also required for DNA methylation, the histone methyltransferase activity is not required for DNA methylation, suggesting that these 2 activities function independently. Probably targeted to histone H3 by different DNA-binding proteins like E2F6, MGA, MAX and/or DP1. During G0 phase, it probably contributes to silencing of MYC- and E2F-responsive genes, suggesting a role in G0/G1 transition in cell cycle. In addition to the histone methyltransferase activity, also methylates non-histone proteins: mediates dimethylation of 'Lys-373' of p53/TP53. Represses the expression of mitochondrial function-related genes, perhaps by occupying their promoter regions, working in concert with probable chromatin reader BAZ2B. This chain is Histone-lysine N-methyltransferase EHMT1 (EHMT1), found in Homo sapiens (Human).